A 215-amino-acid chain; its full sequence is Orotate phosphoribosyltransferase (215 aa).

Residue K26 participates in 5-phospho-alpha-D-ribose 1-diphosphate binding. 34 to 35 (FF) contributes to the orotate binding site. 5-phospho-alpha-D-ribose 1-diphosphate is bound by residues 72 to 73 (YK), R99, K100, K103, H105, and 124 to 132 (DDVITAGTA). Residues T128 and R156 each contribute to the orotate site.

Belongs to the purine/pyrimidine phosphoribosyltransferase family. PyrE subfamily. In terms of assembly, homodimer. The cofactor is Mg(2+).

It carries out the reaction orotidine 5'-phosphate + diphosphate = orotate + 5-phospho-alpha-D-ribose 1-diphosphate. Its pathway is pyrimidine metabolism; UMP biosynthesis via de novo pathway; UMP from orotate: step 1/2. Catalyzes the transfer of a ribosyl phosphate group from 5-phosphoribose 1-diphosphate to orotate, leading to the formation of orotidine monophosphate (OMP). The sequence is that of Orotate phosphoribosyltransferase from Stutzerimonas stutzeri (strain A1501) (Pseudomonas stutzeri).